A 371-amino-acid chain; its full sequence is Queuine tRNA-ribosyltransferase (371 aa).

The Proton acceptor role is filled by Asp-90. Residues 90–94 (DSGGF), Asp-144, Gln-188, and Gly-215 contribute to the substrate site. An RNA binding region spans residues 246–252 (GVGTPED). Catalysis depends on Asp-265, which acts as the Nucleophile. Residues 270 to 274 (TRNAR) are RNA binding; important for wobble base 34 recognition. The Zn(2+) site is built by Cys-303, Cys-305, Cys-308, and His-334.

The protein belongs to the queuine tRNA-ribosyltransferase family. As to quaternary structure, homodimer. Within each dimer, one monomer is responsible for RNA recognition and catalysis, while the other monomer binds to the replacement base PreQ1. It depends on Zn(2+) as a cofactor.

It catalyses the reaction 7-aminomethyl-7-carbaguanine + guanosine(34) in tRNA = 7-aminomethyl-7-carbaguanosine(34) in tRNA + guanine. It functions in the pathway tRNA modification; tRNA-queuosine biosynthesis. In terms of biological role, catalyzes the base-exchange of a guanine (G) residue with the queuine precursor 7-aminomethyl-7-deazaguanine (PreQ1) at position 34 (anticodon wobble position) in tRNAs with GU(N) anticodons (tRNA-Asp, -Asn, -His and -Tyr). Catalysis occurs through a double-displacement mechanism. The nucleophile active site attacks the C1' of nucleotide 34 to detach the guanine base from the RNA, forming a covalent enzyme-RNA intermediate. The proton acceptor active site deprotonates the incoming PreQ1, allowing a nucleophilic attack on the C1' of the ribose to form the product. After dissociation, two additional enzymatic reactions on the tRNA convert PreQ1 to queuine (Q), resulting in the hypermodified nucleoside queuosine (7-(((4,5-cis-dihydroxy-2-cyclopenten-1-yl)amino)methyl)-7-deazaguanosine). This is Queuine tRNA-ribosyltransferase from Neisseria gonorrhoeae (strain NCCP11945).